The primary structure comprises 911 residues: Alpha-actinin-4 (911 aa).

Residues 1 to 269 (MVDYHAANQS…YVSSFYHAFS (269 aa)) are actin-binding. Residues 12–26 (QYGPSSAGNGAGGGG) are interaction with VCL. The residue at position 31 (Y31) is a Phosphotyrosine. Positions 40–61 (RDLLLDPAWEKQQRKTFTAWCN) are interaction with VCL. Calponin-homology (CH) domains follow at residues 50–154 (KQQR…LRFA) and 163–269 (TSAK…HAFS). Positions 84 to 88 (LMLLL) match the LXXLL motif motif. An interaction with VCL region spans residues 108–126 (KINNVNKALDFIASKGVKL). K114 bears the N6-acetyllysine mark. The segment at 177–192 (TAPYKNVNVQNFHISW) is polyphosphoinositide (PIP2)-binding. K214 carries the post-translational modification N6-acetyllysine. T249 is subject to Phosphothreonine. Spectrin repeat units follow at residues 293 to 403 (HLME…WLLN), 413 to 518 (HLAE…ALEK), 528 to 639 (QLHL…ALLE), and 649 to 752 (HLRR…EVEN). N6-acetyllysine is present on residues K592 and K625. S696 is subject to Phosphoserine. Positions 736–911 (WEQLLTTIAR…STALYGESDL (176 aa)) are mediates interaction with MICALL2. EF-hand domains follow at residues 765–800 (EQMQ…LGYD) and 806–841 (QGEA…ETTD). D778 is a binding site for Ca(2+). K779 carries the N6-acetyllysine modification. The Ca(2+) site is built by D780 and E789. K859 is modified (N6-acetyllysine). A Phosphoserine modification is found at S909.

It belongs to the alpha-actinin family. Homodimer; antiparallel. Binds TRIM3 at the N-terminus. Interacts with MICALL2 (preferentially in opened conformation); stimulated by RAB13 activation. Identified in a complex with CASK, IQGAP1, MAGI2, NPHS1, SPTAN1 and SPTBN1. Identified in a IGF2BP1-dependent mRNP granule complex containing untranslated mRNAs. Component of the CART complex, at least composed of ACTN4, HGS/HRS, MYO5B and TRIM3. Interacts with MAGI1. Interacts with PDLIM2. Interacts with PPARG and RARA. Binds to VCL; this interaction triggers VCL conformational changes. Interacts with SEPTIN14. Interacts with IGSF8. As to expression, widely expressed.

The protein localises to the nucleus. Its subcellular location is the cytoplasm. It is found in the cell junction. The protein resides in the cytoskeleton. It localises to the stress fiber. The protein localises to the perinuclear region. Functionally, F-actin cross-linking protein which is thought to anchor actin to a variety of intracellular structures. This is a bundling protein. Probably involved in vesicular trafficking via its association with the CART complex. The CART complex is necessary for efficient transferrin receptor recycling but not for EGFR degradation. Involved in tight junction assembly in epithelial cells probably through interaction with MICALL2. Links MICALL2 to the actin cytoskeleton and recruits it to the tight junctions. May also function as a transcriptional coactivator, stimulating transcription mediated by the nuclear hormone receptors PPARG and RARA. Association with IGSF8 regulates the immune synapse formation and is required for efficient T-cell activation. This chain is Alpha-actinin-4, found in Homo sapiens (Human).